Consider the following 203-residue polypeptide: Short chain dehydrogenase/reductase dpmpH (203 aa).

NADP(+) is bound by residues D23, Y77, and K81. Residue Y77 is the Proton acceptor of the active site. The Lowers pKa of active site Tyr role is filled by K81.

This sequence belongs to the short-chain dehydrogenases/reductases (SDR) family.

Its pathway is secondary metabolite biosynthesis; terpenoid biosynthesis. Short chain dehydrogenase/reductase; part of the gene cluster that mediates the biosynthesis of diterpenoid pyrones. The first step of the pathway is the synthesis of the alpha-pyrone moiety by the polyketide synthase dpmpA via condensation of one acetyl-CoA starter unit with 3 malonyl-CoA units and 2 methylations. The alpha-pyrone is then combined with geranylgeranyl pyrophosphate (GGPP) formed by the GGPP synthase dpmpD through the action of the prenyltransferase dpmpC to yield a linear alpha-pyrone diterpenoid. Subsequent steps in the diterpenoid pyrone biosynthetic pathway involve the decalin core formation, which is initiated by the epoxidation of the C10-C11 olefin by the FAD-dependent oxidoreductase dpmpE, and is followed by a cyclization cascade catalyzed by the terpene cyclase dpmpB. The short chain dehydrogenase/reductase dpmpG then oxidizes the 8S hydroxy group to a ketone and the short chain dehydrogenase/reductase dpmpH reduces the ketone to the 8R hydroxy group to yield higginsianin B. Higginsianin B is further methylated by the methyltransferase dpmpI to produce the intermediate named FDDP B. The cytochrome P450 monooxygenase dpmpJ then oxidizes the C-26 methyl to primary alcohol, producing the final diterpenoid pyrone with a C-26 primary alcohol on the gamma-pyrone moiety named FDDP C. The polypeptide is Short chain dehydrogenase/reductase dpmpH (Macrophomina phaseolina (strain MS6) (Charcoal rot fungus)).